Reading from the N-terminus, the 185-residue chain is Elongation factor P (185 aa).

This sequence belongs to the elongation factor P family.

The protein resides in the cytoplasm. It participates in protein biosynthesis; polypeptide chain elongation. Involved in peptide bond synthesis. Stimulates efficient translation and peptide-bond synthesis on native or reconstituted 70S ribosomes in vitro. Probably functions indirectly by altering the affinity of the ribosome for aminoacyl-tRNA, thus increasing their reactivity as acceptors for peptidyl transferase. The polypeptide is Elongation factor P (Paraburkholderia phytofirmans (strain DSM 17436 / LMG 22146 / PsJN) (Burkholderia phytofirmans)).